The following is a 444-amino-acid chain: MKKLNIGDYNDILNEVLNDISPTEVEKKELKVFSDKIIAKIKDISKKPVVDIIQVGSTARDANLKDDHDIDIFLRFERETDRDTLKESGLKIGKEVIDYFNGKSWVEYAEHPYVSGEIEKFNLDIVPCYGIENCEKIISAVDRTPLHNEFLIMSYKNKNLSDDIRLLKKFLKGLGIYGSDLKTAGFSGYLCELLILKYGGFLTLISDVKTWKPTKSIVLNEIYEMYDLKKDHVFSKFDDPLVVYDPVDLNRNVAAALNEENLCKFIFYSKMFLKNPSKDFFYGFDKKITDFLNRRERGYLLTLEIKRPENIVEDVIYPQMEKIQKSINKLVKEHDFEYLRYQNFADENTCYLSWEFLVNELPSVKLRIGPPVYSEPGVMNFITHNEHYFVKGCNVCAYKTRKYKNIQILFEDIVNGKFRKIITYPKYVCPENAEIRLGTFVERT.

ATP contacts are provided by S57 and R60. 2 residues coordinate CTP: S57 and R60. Mg(2+) is bound by residues D69, D71, and D124. H147, K168, and Y177 together coordinate ATP. Positions 147, 168, and 177 each coordinate CTP.

The protein belongs to the tRNA nucleotidyltransferase/poly(A) polymerase family. Archaeal CCA-adding enzyme subfamily. Homodimer. Mg(2+) is required as a cofactor.

The catalysed reaction is a tRNA precursor + 2 CTP + ATP = a tRNA with a 3' CCA end + 3 diphosphate. The enzyme catalyses a tRNA with a 3' CCA end + 2 CTP + ATP = a tRNA with a 3' CCACCA end + 3 diphosphate. Its function is as follows. Catalyzes the addition and repair of the essential 3'-terminal CCA sequence in tRNAs without using a nucleic acid template. Adds these three nucleotides in the order of C, C, and A to the tRNA nucleotide-73, using CTP and ATP as substrates and producing inorganic pyrophosphate. tRNA 3'-terminal CCA addition is required both for tRNA processing and repair. Also involved in tRNA surveillance by mediating tandem CCA addition to generate a CCACCA at the 3' terminus of unstable tRNAs. While stable tRNAs receive only 3'-terminal CCA, unstable tRNAs are marked with CCACCA and rapidly degraded. The protein is CCA-adding enzyme of Methanococcus maripaludis (strain C7 / ATCC BAA-1331).